An 833-amino-acid chain; its full sequence is Translation initiation factor IF-2 (833 aa).

Residues 1 to 247 (MTEDVKKADG…ALQQAFTKPA (247 aa)) form a disordered region. Composition is skewed to basic and acidic residues over residues 53–99 (QKAE…EAKK) and 110–152 (VDVE…RYAE). A compositionally biased stretch (acidic residues) spans 153–166 (LSEEDAENENSEDY). Positions 187 to 203 (KENRNRGGKNKVAKAKK) are enriched in basic residues. Residues 204–227 (GGREDESSKTERESNRRNQKDGKM) are compositionally biased toward basic and acidic residues. One can recognise a tr-type G domain in the interval 333 to 502 (TRAPVVTIMG…LLQSEVLELT (170 aa)). Positions 342–349 (GHVDHGKT) are G1. GTP is bound at residue 342 to 349 (GHVDHGKT). The interval 367–371 (GITQH) is G2. The interval 388 to 391 (DTPG) is G3. GTP-binding positions include 388 to 392 (DTPGH) and 442 to 445 (NKID). The tract at residues 442–445 (NKID) is G4. The interval 478–480 (SAK) is G5.

This sequence belongs to the TRAFAC class translation factor GTPase superfamily. Classic translation factor GTPase family. IF-2 subfamily.

The protein localises to the cytoplasm. In terms of biological role, one of the essential components for the initiation of protein synthesis. Protects formylmethionyl-tRNA from spontaneous hydrolysis and promotes its binding to the 30S ribosomal subunits. Also involved in the hydrolysis of GTP during the formation of the 70S ribosomal complex. This is Translation initiation factor IF-2 (infB) from Pasteurella multocida (strain Pm70).